Consider the following 334-residue polypeptide: Holliday junction branch migration complex subunit RuvB (334 aa).

Residues 4 to 184 form a large ATPase domain (RuvB-L) region; it reads ADRLIQPQLQ…FGIPLRLEFY (181 aa). Residues arginine 24, glycine 65, lysine 68, threonine 69, threonine 70, 131–133, arginine 174, tyrosine 184, and arginine 221 each bind ATP; that span reads EDY. Threonine 69 contributes to the Mg(2+) binding site. A small ATPAse domain (RuvB-S) region spans residues 185-255; sequence NIKDLSTIVT…VADHALDLLD (71 aa). The segment at 258 to 334 is head domain (RuvB-H); it reads NEGFDYMDRK…YQHFQLIKPE (77 aa). Residues arginine 294, arginine 313, and arginine 318 each coordinate DNA.

It belongs to the RuvB family. In terms of assembly, homohexamer. Forms an RuvA(8)-RuvB(12)-Holliday junction (HJ) complex. HJ DNA is sandwiched between 2 RuvA tetramers; dsDNA enters through RuvA and exits via RuvB. An RuvB hexamer assembles on each DNA strand where it exits the tetramer. Each RuvB hexamer is contacted by two RuvA subunits (via domain III) on 2 adjacent RuvB subunits; this complex drives branch migration. In the full resolvosome a probable DNA-RuvA(4)-RuvB(12)-RuvC(2) complex forms which resolves the HJ.

It is found in the cytoplasm. The catalysed reaction is ATP + H2O = ADP + phosphate + H(+). Its function is as follows. The RuvA-RuvB-RuvC complex processes Holliday junction (HJ) DNA during genetic recombination and DNA repair, while the RuvA-RuvB complex plays an important role in the rescue of blocked DNA replication forks via replication fork reversal (RFR). RuvA specifically binds to HJ cruciform DNA, conferring on it an open structure. The RuvB hexamer acts as an ATP-dependent pump, pulling dsDNA into and through the RuvAB complex. RuvB forms 2 homohexamers on either side of HJ DNA bound by 1 or 2 RuvA tetramers; 4 subunits per hexamer contact DNA at a time. Coordinated motions by a converter formed by DNA-disengaged RuvB subunits stimulates ATP hydrolysis and nucleotide exchange. Immobilization of the converter enables RuvB to convert the ATP-contained energy into a lever motion, pulling 2 nucleotides of DNA out of the RuvA tetramer per ATP hydrolyzed, thus driving DNA branch migration. The RuvB motors rotate together with the DNA substrate, which together with the progressing nucleotide cycle form the mechanistic basis for DNA recombination by continuous HJ branch migration. Branch migration allows RuvC to scan DNA until it finds its consensus sequence, where it cleaves and resolves cruciform DNA. This chain is Holliday junction branch migration complex subunit RuvB, found in Shewanella sp. (strain W3-18-1).